Here is a 364-residue protein sequence, read N- to C-terminus: MERNSGPEAGPEAELEEGEPEVKKRKLMCVEFASVASCDAAVAQCYLAENDWEMERALNSYFEPAVEESASESRPESLSEPGSCVDLTKEETNDSISSKTSTSEDKSVQQEDGSVFSFITWNIDGLDMNNLLERARGVCSYLTLYSPDVIFLQEVIPPYYAYLKKKASSYKIITGREEGYFTAIMLKKSRVKFKSQEIIPFPNTQMMRNLLCVHVSVSGNELCLMTSHLESTRGHAKERMNQFKMVLEKMQEAPGSATVIFAGDTNLRDQEVTKCGGLPNNILDVWEFLGKPKHCQYTWDTQMNSNLGIAANCKLRFDRIFFRAAAEGGHIIPQSLDLLGLEKLDCGRFPSDHWGLLCTLDVIL.

Methionine 1 is subject to N-acetylmethionine. Residues 1 to 10 show a composition bias toward low complexity; sequence MERNSGPEAG. Positions 1–21 are disordered; that stretch reads MERNSGPEAGPEAELEEGEPE. Lysine 23 is covalently cross-linked (Glycyl lysine isopeptide (Lys-Gly) (interchain with G-Cter in SUMO2)). The tract at residues 68-108 is disordered; the sequence is ESASESRPESLSEPGSCVDLTKEETNDSISSKTSTSEDKSV. 2 positions are modified to phosphothreonine; by ACVR1B: threonine 88 and threonine 92. Serine 95 is modified (phosphoserine). The segment at 122-126 is interaction with 5' end of substrate DNA; that stretch reads NIDGL. Positions 124 and 154 each coordinate Mg(2+). Residues 228 to 233 are interaction with 5' end of substrate DNA; it reads HLESTR. Aspartate 264 (proton donor/acceptor) is an active-site residue. The tract at residues 266-268 is interaction with 5' end of substrate DNA; sequence NLR.

It belongs to the CCR4/nocturin family. Interacts with TRAF2, TRAF3, TRAF5, TRAF6, TNFRSF8/CD30, TNFRSF5/CD40, TNFRSF1B/TNF-R75, ETS1, ETS2, FLI1, SMAD3 and ACVR1B/ALK4. Mg(2+) serves as cofactor. Mn(2+) is required as a cofactor. In terms of processing, ubiquitinated by TRAF6.

The protein localises to the nucleus. Its subcellular location is the PML body. The protein resides in the nucleolus. It is found in the cytoplasm. Functionally, DNA repair enzyme that can remove a variety of covalent adducts from DNA through hydrolysis of a 5'-phosphodiester bond, giving rise to DNA with a free 5' phosphate. Catalyzes the hydrolysis of dead-end complexes between DNA and the topoisomerase 2 (TOP2) active site tyrosine residue. The 5'-tyrosyl DNA phosphodiesterase activity can enable the repair of TOP2-induced DNA double-strand breaks/DSBs without the need for nuclease activity, creating a 'clean' DSB with 5'-phosphate termini that are ready for ligation. Thereby, protects the transcription of many genes involved in neurological development and maintenance from the abortive activity of TOP2. Hydrolyzes 5'-phosphoglycolates on protruding 5' ends on DSBs due to DNA damage by radiation and free radicals. Has preference for single-stranded DNA or duplex DNA with a 4 base pair overhang as substrate. Also has 3'-tyrosyl DNA phosphodiesterase activity, but less efficiently and much slower than TDP1. Constitutes the major if not only 5'-tyrosyl-DNA phosphodiesterase in cells. Also acts as an adapter by participating in the specific activation of MAP3K7/TAK1 in response to TGF-beta: associates with components of the TGF-beta receptor-TRAF6-TAK1 signaling module and promotes their ubiquitination dependent complex formation. Involved in non-canonical TGF-beta induced signaling routes. May also act as a negative regulator of ETS1 and may inhibit NF-kappa-B activation. Acts as a regulator of ribosome biogenesis following stress. The polypeptide is Tyrosyl-DNA phosphodiesterase 2 (TDP2) (Bos taurus (Bovine)).